A 395-amino-acid chain; its full sequence is Elongation factor Tu (395 aa).

One can recognise a tr-type G domain in the interval 10 to 204 (KPHVNIGTIG…EVDAYIPTPE (195 aa)). A G1 region spans residues 19-26 (GHVDHGKT). 19–26 (GHVDHGKT) is a binding site for GTP. Threonine 26 is a binding site for Mg(2+). Residues 60–64 (GITIS) form a G2 region. Positions 81 to 84 (DCPG) are G3. GTP-binding positions include 81–85 (DCPGH) and 136–139 (NKCD). A G4 region spans residues 136-139 (NKCD). Residues 174 to 176 (SAL) are G5.

This sequence belongs to the TRAFAC class translation factor GTPase superfamily. Classic translation factor GTPase family. EF-Tu/EF-1A subfamily. In terms of assembly, monomer.

It localises to the cytoplasm. The catalysed reaction is GTP + H2O = GDP + phosphate + H(+). GTP hydrolase that promotes the GTP-dependent binding of aminoacyl-tRNA to the A-site of ribosomes during protein biosynthesis. The sequence is that of Elongation factor Tu from Bacillus cereus (strain ATCC 10987 / NRS 248).